A 258-amino-acid polypeptide reads, in one-letter code: MKLYIIGAGPGDPDLITVKGLKLLQQADVVLYADSLVSQDLIAKSKPGAEVLKTAGMHLEEMVGTMLDRMREGKMVVRVHTGDPAMYGAIMEQMVLLKREGVDIEIVPGVTSVFAAAAAAEAELTIPDLTQTVILTRAEGRTPVPEFEKLTDLAKHKCTIALFLSATLTKKVMKEFINAGWSEDTPVVVVYKATWPDEKIVRTTVKDLDDAMRTNGIRKQAMILAGWALDPHIHDKDYRSKLYDKTFTHGFRKGVKSE.

This sequence belongs to the precorrin methyltransferase family. As to quaternary structure, homodimer.

The enzyme catalyses Co-precorrin-4 + S-adenosyl-L-methionine = Co-precorrin-5A + S-adenosyl-L-homocysteine + H(+). Its pathway is cofactor biosynthesis; adenosylcobalamin biosynthesis; cob(II)yrinate a,c-diamide from sirohydrochlorin (anaerobic route): step 4/10. Catalyzes the methylation of C-11 in cobalt-precorrin-4 to form cobalt-precorrin-5A. The polypeptide is Cobalt-precorrin-4 C(11)-methyltransferase (cbiF) (Priestia megaterium (Bacillus megaterium)).